The primary structure comprises 463 residues: Asparagine--tRNA ligase (463 aa).

Belongs to the class-II aminoacyl-tRNA synthetase family. As to quaternary structure, homodimer.

The protein resides in the cytoplasm. It carries out the reaction tRNA(Asn) + L-asparagine + ATP = L-asparaginyl-tRNA(Asn) + AMP + diphosphate + H(+). The polypeptide is Asparagine--tRNA ligase (Bacillus thuringiensis subsp. konkukian (strain 97-27)).